The primary structure comprises 1445 residues: ABC-type transporter FGSG_00046 (1445 aa).

The next 11 helical transmembrane spans lie at 21–41 (LFEE…MLLV), 77–97 (LILW…AAAL), 119–138 (PSSL…VTRV), 150–170 (ISIL…FESL), 187–207 (EIVG…FILG), 255–277 (TLLR…PLLL), 297–317 (YGLI…TALA), 368–388 (LQFV…IFLL), 392–412 (VALG…GTVL), 481–501 (VFST…YVLM), and 520–540 (SLFS…PAIF). Residues 259 to 541 (GGLCRLFTAL…FLTSVPAIFS (283 aa)) enclose the ABC transmembrane type-1 1 domain. The ABC transporter 1 domain maps to 595 to 821 (IRDGSVRWKG…DEIEASTYSR (227 aa)). 627-634 (GSVGSGKS) is an ATP binding site. The tract at residues 803–850 (RNTQKDMQDDEIEASTYSREQNGPKKQEEDANHESNQSPETSQEHELA) is disordered. Basic and acidic residues predominate over residues 824–835 (NGPKKQEEDANH). Transmembrane regions (helical) follow at residues 868–888 (GMGF…WQNF), 912–932 (IGVY…VTWF), 1004–1024 (IPLT…QLVM), 1026–1046 (SIGT…LAII), 1116–1136 (LTLV…GVTI), and 1147–1167 (IGLA…LLTW). An ABC transmembrane type-1 2 domain is found at 974–1173 (HRAPMSYFES…LLTWWTMMEA (200 aa)). Residues 1210 to 1441 (IELKELSASY…DVSLFQDLFS (232 aa)) enclose the ABC transporter 2 domain. 1244–1251 (GRTGSGKT) provides a ligand contact to ATP.

It belongs to the ABC transporter superfamily. ABCC family.

The protein resides in the cell membrane. ABC-type transporter; part of the gene cluster that mediates the biosynthesis of gramillins A and B, bicyclic lipopeptides that induce cell death in maize leaves but not in wheat leaves. May be involved in the secretion of gramillins. The sequence is that of ABC-type transporter FGSG_00046 from Gibberella zeae (strain ATCC MYA-4620 / CBS 123657 / FGSC 9075 / NRRL 31084 / PH-1) (Wheat head blight fungus).